The following is a 183-amino-acid chain: Protein SHI RELATED SEQUENCE 6 (183 aa).

Zn(2+)-binding residues include Cys41, Cys44, Cys52, Cys57, Cys61, and Cys68. The segment at residues 41–68 (CRDCGNRAKKECLFERCRTCCKSRGYNC) is a DNA-binding region (zn(2)-C6 fungal-type; degenerate). A compositionally biased stretch (low complexity) spans 79–88 (SSATRSSSSP). The interval 79 to 121 (SSATRSSSSPSERKKKLKIDKQSSPNVSLLPTTTSRQERGFRE) is disordered. Polar residues predominate over residues 100–113 (QSSPNVSLLPTTTS). Positions 157–160 (ISGH) match the Required for homo- and heterodimerization motif.

Belongs to the SHI protein family.

It is found in the nucleus. Functionally, transcription activator that binds DNA on 5'-ACTCTAC-3' and promotes auxin homeostasis-regulating gene expression (e.g. YUC genes), as well as genes affecting stamen development, cell expansion and timing of flowering. Synergistically with other SHI-related proteins, regulates gynoecium, stamen and leaf development in a dose-dependent manner, controlling apical-basal patterning. Promotes style and stigma formation, and influences vascular development during gynoecium development. May also have a role in the formation and/or maintenance of the shoot apical meristem (SAM). The protein is Protein SHI RELATED SEQUENCE 6 (SRS6) of Arabidopsis thaliana (Mouse-ear cress).